Here is an 828-residue protein sequence, read N- to C-terminus: Glycerol-3-phosphate acyltransferase (828 aa).

Positions 309 to 314 (CHRSHI) match the HXXXXD motif motif.

This sequence belongs to the GPAT/DAPAT family.

The protein resides in the cell inner membrane. The enzyme catalyses sn-glycerol 3-phosphate + an acyl-CoA = a 1-acyl-sn-glycero-3-phosphate + CoA. It participates in phospholipid metabolism; CDP-diacylglycerol biosynthesis; CDP-diacylglycerol from sn-glycerol 3-phosphate: step 1/3. This is Glycerol-3-phosphate acyltransferase from Pseudomonas entomophila (strain L48).